The chain runs to 1180 residues: Protocadherin-12 (1180 aa).

The first 17 residues, 1–17 (MMLLLPFLLGLLGPGSY), serve as a signal peptide directing secretion. Residues 18 to 716 (LFISGDCQEV…HEPGVLSTPA (699 aa)) are Extracellular-facing. Cadherin domains are found at residues 28-135 (ATVM…QPQF), 136-244 (PKDE…SPVF), 245-352 (AESS…APSI), 355-460 (TWAS…APVF), and 461-565 (EKSR…APEV). Asn265 and Asn415 each carry an N-linked (GlcNAc...) asparagine glycan. N-linked (GlcNAc...) asparagine glycosylation is found at Asn582, Asn659, and Asn662. A Cadherin 6 domain is found at 600–711 (PAGTGIPPKA…LRDSAHEPGV (112 aa)). The helical transmembrane segment at 717-737 (LALICLAVLLAIFGLLLALFV) threads the bilayer. Residues 738 to 1180 (SICRTERKDN…ESRLGCGRNL (443 aa)) lie on the Cytoplasmic side of the membrane. Disordered regions lie at residues 857-930 (NASR…GPHQ) and 973-1026 (QFQP…PEED). Residue Ser859 is modified to Phosphoserine. A compositionally biased stretch (polar residues) spans 904-918 (PASSATLRRQRNFNG). The segment covering 1014–1026 (PDLEEGPPSPEED) has biased composition (acidic residues). A Phosphoserine modification is found at Ser1064. The span at 1076–1093 (SSPDATTSEEPRTFQTFG) shows a compositional bias: polar residues. Disordered stretches follow at residues 1076 to 1104 (SSPD…ELSP) and 1156 to 1180 (SGAS…GRNL).

N-glycosylated. Post-translationally, cleaved by ADAM10 close to the transmembrane domain to release the Protocadherin-12, secreted form in the serum. Cleavage results in reduced cellular adhesion in a cell migration assay. In terms of tissue distribution, expressed in endothelial cells: localizes in vasculogenic rather than angiogenic endothelium. Strongly expressed in a subset of invasive cells of the placenta, named glycogen-rich trophoblasts cells (at protein level). glycogen-rich trophoblasts cells originate from the from the ectoplacental cone where they rapidly form tight islets (at protein level). In adult mice, present at high level in mesangial cells of kidney glomeruli, while expression was not detected in other types of perivascular cells.

It is found in the cell membrane. The protein resides in the cell junction. Its subcellular location is the secreted. In terms of biological role, cellular adhesion molecule that may play an important role in cell-cell interactions at interendothelial junctions. Acts as a regulator of cell migration, probably via increasing cell-cell adhesion. Promotes homotypic calcium-dependent aggregation and adhesion and clusters at intercellular junctions. Unable to bind to catenins, weakly associates with the cytoskeleton. In Mus musculus (Mouse), this protein is Protocadherin-12.